Reading from the N-terminus, the 393-residue chain is MSHRRSTVKGSLSFANPTVRAWLFQILAVVAVVGIVGWLFHNTVTNLNNRGITSGFAFLDRGAGFGIVQHLIDYQQGDTYGRVFIVGLLNTLLVSALCIVFASVLGFFIGLARLSDNWLLRKLSTIYIEIFRNIPPLLQIFFWYFAVLRNLPGPRQAVSAFDLAFLSNRGLYIPSPQLGDGFIAFILAVVMAIVLSVGLFRFNKTYQIKTGQLRRTWPIAAVLIIGLPLLAQWLFGAALHWDVPALRGFNFRGGMVLIPELAALTLALSVYTSAFIAEIIRAGIQAVPYGQHEAARSLGLPNPVTLRQVIIPQALRVIIPPLTSQYLNIVKNSSLAAAIGYPDMVSLFAGTVLNQTGQAIETIAMTMSVYLIISLTISLLMNIYNRRIAIVER.

8 helical membrane-spanning segments follow: residues 21 to 41 (AWLFQILAVVAVVGIVGWLFH), 92 to 112 (LLVSALCIVFASVLGFFIGLA), 128 to 148 (IEIFRNIPPLLQIFFWYFAVL), 180 to 200 (DGFIAFILAVVMAIVLSVGLF), 219 to 239 (IAAVLIIGLPLLAQWLFGAAL), 256 to 276 (VLIPELAALTLALSVYTSAFI), 333 to 353 (SSLAAAIGYPDMVSLFAGTVL), and 363 to 383 (IAMTMSVYLIISLTISLLMNI). The 294-residue stretch at 88 to 381 (LLNTLLVSAL…IISLTISLLM (294 aa)) folds into the ABC transmembrane type-1 domain.

This sequence belongs to the binding-protein-dependent transport system permease family. HisMQ subfamily.

The protein resides in the cell inner membrane. In terms of biological role, probably part of the binding-protein-dependent transport system YdhWXYZ for an amino acid; probably responsible for the translocation of the substrate across the membrane. The chain is Putative amino-acid ABC transporter permease protein YhdX (yhdX) from Escherichia coli (strain K12).